The following is a 293-amino-acid chain: 4-hydroxy-tetrahydrodipicolinate synthase (293 aa).

Thr-47 lines the pyruvate pocket. Tyr-135 acts as the Proton donor/acceptor in catalysis. Residue Lys-164 is the Schiff-base intermediate with substrate of the active site. Ile-205 contacts pyruvate.

Belongs to the DapA family. Homotetramer; dimer of dimers.

Its subcellular location is the cytoplasm. It catalyses the reaction L-aspartate 4-semialdehyde + pyruvate = (2S,4S)-4-hydroxy-2,3,4,5-tetrahydrodipicolinate + H2O + H(+). It functions in the pathway amino-acid biosynthesis; L-lysine biosynthesis via DAP pathway; (S)-tetrahydrodipicolinate from L-aspartate: step 3/4. In terms of biological role, catalyzes the condensation of (S)-aspartate-beta-semialdehyde [(S)-ASA] and pyruvate to 4-hydroxy-tetrahydrodipicolinate (HTPA). The sequence is that of 4-hydroxy-tetrahydrodipicolinate synthase from Symbiobacterium thermophilum (strain DSM 24528 / JCM 14929 / IAM 14863 / T).